A 310-amino-acid chain; its full sequence is MEIPHIPVLRNEVVDIFKDLQGLLIDCTLGFAGHSSAILSANENIRIFACDKDDEALDFSKKRVEIFKNRIKIFKSGFSNFLPFLETNEILNLSNVVGILADIGVSSLQIDNNDRGFSLKSDALDMRMDKNASLDAKFVVNHYSRSDLERIFYEFAELTNAKQIAAKIANYRADKEITSAKELATIIGTSNFKNRSISTATLAFQAIRIEVNKELDELNKLLDSIENSAIQNAKIAIITFHSLEDKIVKNRFKKWAQSCICPPFFERCECGNNHAIGKILTKKPITASADELKQNSRAKSAKLRVFEIKR.

S-adenosyl-L-methionine-binding positions include 32-34, D51, F84, D102, and Q109; that span reads AGH.

Belongs to the methyltransferase superfamily. RsmH family.

The protein resides in the cytoplasm. The catalysed reaction is cytidine(1402) in 16S rRNA + S-adenosyl-L-methionine = N(4)-methylcytidine(1402) in 16S rRNA + S-adenosyl-L-homocysteine + H(+). Its function is as follows. Specifically methylates the N4 position of cytidine in position 1402 (C1402) of 16S rRNA. The chain is Ribosomal RNA small subunit methyltransferase H from Campylobacter hominis (strain ATCC BAA-381 / DSM 21671 / CCUG 45161 / LMG 19568 / NCTC 13146 / CH001A).